Reading from the N-terminus, the 402-residue chain is 4-hydroxy-3-methylbut-2-en-1-yl diphosphate synthase (ferredoxin) (402 aa).

[4Fe-4S] cluster is bound by residues cysteine 311, cysteine 314, cysteine 345, and glutamate 352.

The protein belongs to the IspG family. The cofactor is [4Fe-4S] cluster.

It catalyses the reaction (2E)-4-hydroxy-3-methylbut-2-enyl diphosphate + 2 oxidized [2Fe-2S]-[ferredoxin] + H2O = 2-C-methyl-D-erythritol 2,4-cyclic diphosphate + 2 reduced [2Fe-2S]-[ferredoxin] + H(+). It participates in isoprenoid biosynthesis; isopentenyl diphosphate biosynthesis via DXP pathway; isopentenyl diphosphate from 1-deoxy-D-xylulose 5-phosphate: step 5/6. In terms of biological role, converts 2C-methyl-D-erythritol 2,4-cyclodiphosphate (ME-2,4cPP) into 1-hydroxy-2-methyl-2-(E)-butenyl 4-diphosphate, using ferredoxin I (PetF) as the reducing agent. This Thermosynechococcus vestitus (strain NIES-2133 / IAM M-273 / BP-1) protein is 4-hydroxy-3-methylbut-2-en-1-yl diphosphate synthase (ferredoxin).